Reading from the N-terminus, the 249-residue chain is Probable transcriptional regulatory protein OTT_1378 (249 aa).

It belongs to the TACO1 family.

The protein resides in the cytoplasm. The sequence is that of Probable transcriptional regulatory protein OTT_1378 from Orientia tsutsugamushi (strain Ikeda) (Rickettsia tsutsugamushi).